The sequence spans 287 residues: Ret finger protein-like 4A (287 aa).

The RING-type; degenerate zinc finger occupies 11 to 53 (CPVCLKDLEEAVQLKCGYACCLQCLNSLQKEPDGEGLLCRFCS). The B30.2/SPRY domain maps to 78–276 (EPKLKSVLTM…LSICSVINPS (199 aa)).

Interacts with PSMB1, UBE2A and CCNB1.

It localises to the cytoplasm. Its subcellular location is the nucleus. The polypeptide is Ret finger protein-like 4A (RFPL4A) (Homo sapiens (Human)).